The chain runs to 562 residues: Protein FAM222B (562 aa).

Low complexity-rich tracts occupy residues 147 to 167 (PQAQ…LAHA) and 183 to 201 (ALSH…HPQQ). 2 disordered regions span residues 147 to 242 (PQAQ…PPNV) and 537 to 562 (AHRA…PGYR).

The protein belongs to the FAM222 family.

This Mus musculus (Mouse) protein is Protein FAM222B (Fam222b).